The primary structure comprises 135 residues: Large ribosomal subunit protein uL16c (135 aa).

The protein belongs to the universal ribosomal protein uL16 family. Part of the 50S ribosomal subunit.

The protein resides in the plastid. The protein localises to the chloroplast. The polypeptide is Large ribosomal subunit protein uL16c (Gossypium hirsutum (Upland cotton)).